A 704-amino-acid polypeptide reads, in one-letter code: Protein NPG1 (704 aa).

TPR repeat units follow at residues 24–57, 58–90, 177–210, 309–342, 430–463, 555–588, 589–622, and 662–695; these read NGIC…SLNF, EEAR…QAAI, SHAV…QWNL, IERW…HEQP, PDLI…TGGS, FEVW…KQYS, ASML…DGSS, and RKAW…EESD.

Interacts with calmodulin in a calcium-dependent manner. Expressed only in pollen and in pollen tubes.

Calmodulin-binding protein essential for pollen germination, but not necessary for microsporogenesis or gametogenesis. The protein is Protein NPG1 of Arabidopsis thaliana (Mouse-ear cress).